Here is an 827-residue protein sequence, read N- to C-terminus: Disintegrin and metalloproteinase domain-containing protein 17 (827 aa).

The signal sequence occupies residues 1-17; that stretch reads MRQRLLFLTTLVPFVLA. Positions 18-214 are excised as a propeptide; sequence PRPPEEPGSG…SEEFVRRVKR (197 aa). A glycan (N-linked (GlcNAc...) asparagine) is linked at Asn-157. Positions 182-189 match the Cysteine switch motif; the sequence is KVCGYLNA. Residue Cys-184 participates in Zn(2+) binding. Residues 215–671 lie on the Extracellular side of the membrane; the sequence is RAEPNPLKNT…NTFGKFLADN (457 aa). Residues 223–474 form the Peptidase M12B domain; it reads NTCKLLVVAD…KAQECFQERS (252 aa). Disulfide bonds link Cys-225-Cys-333, Cys-365-Cys-469, and Cys-423-Cys-453. Asn-264 carries N-linked (GlcNAc...) asparagine glycosylation. His-405 serves as a coordination point for Zn(2+). Glu-406 is an active-site residue. The Zn(2+) site is built by His-409 and His-415. 4 N-linked (GlcNAc...) asparagine glycosylation sites follow: Asn-452, Asn-498, Asn-539, and Asn-551. Residues 475–563 form the Disintegrin domain; the sequence is NKVCGNSRVD…ECPPPGDAED (89 aa). Intrachain disulfides connect Cys-534–Cys-555, Cys-573–Cys-582, Cys-578–Cys-591, and Cys-593–Cys-600. The tract at residues 603–671 is crambin-like; it reads CCRNLSGPCV…NTFGKFLADN (69 aa). A glycan (N-linked (GlcNAc...) asparagine) is linked at Asn-606. The helical transmembrane segment at 672 to 692 threads the bilayer; sequence IVGSVLVFSLIFWIPFSILVH. Residues 693–827 are Cytoplasmic-facing; the sequence is CVDKKLDKQY…SRVDSKETEC (135 aa). An SH3-binding motif is present at residues 731 to 738; that stretch reads PAPQTPGR. Thr-735 bears the Phosphothreonine; by MAPK14 mark. Thr-764 bears the Phosphothreonine mark. The tract at residues 766-827 is disordered; that stretch reads QEDPSTDSHV…SRVDSKETEC (62 aa). Ser-770 bears the Phosphoserine mark. Composition is skewed to basic and acidic residues over residues 771 to 784, 794 to 810, and 818 to 827; these read TDSH…EKDP, SFED…EKAA, and SRVDSKETEC. 2 positions are modified to phosphoserine: Ser-794 and Ser-822.

As to quaternary structure, interacts with MAD2L1, MAPK14 and MUC1. Interacts with iRhom1/RHBDF1 and iRhom2/RHBDF2. Interacts with FRMD8 via its interaction with iRhom1/RHBDF1 and iRhom2/RHBDF2. Interacts with TSPAN8. It depends on Zn(2+) as a cofactor. The precursor is cleaved by a furin endopeptidase. In terms of processing, phosphorylated. Stimulation by growth factor or phorbol 12-myristate 13-acetate induces phosphorylation of Ser-822 but decreases phosphorylation of Ser-794. Phosphorylation at Thr-735 by MAPK14 is required for ADAM17-mediated ectodomain shedding.

It is found in the membrane. It carries out the reaction Narrow endopeptidase specificity. Cleaves Pro-Leu-Ala-Gln-Ala-|-Val-Arg-Ser-Ser-Ser in the membrane-bound, 26-kDa form of tumor necrosis factor alpha (TNFalpha). Similarly cleaves other membrane-anchored, cell-surface proteins to 'shed' the extracellular domains.. Its function is as follows. Transmembrane metalloprotease which mediates the ectodomain shedding of a myriad of transmembrane proteins including adhesion proteins, growth factor precursors and cytokines important for inflammation and immunity. Cleaves the membrane-bound precursor of TNF-alpha to its mature soluble form. Responsible for the proteolytical release of soluble JAM3 from endothelial cells surface. Responsible for the proteolytic release of several other cell-surface proteins, including p75 TNF-receptor, interleukin 1 receptor type II, p55 TNF-receptor, transforming growth factor-alpha, L-selectin, growth hormone receptor, MUC1 and the amyloid precursor protein. Acts as an activator of Notch pathway by mediating cleavage of Notch, generating the membrane-associated intermediate fragment called Notch extracellular truncation (NEXT). Plays a role in the proteolytic processing of ACE2. Plays a role in hemostasis through shedding of GP1BA, the platelet glycoprotein Ib alpha chain. Mediates the proteolytic cleavage of LAG3, leading to release the secreted form of LAG3. Mediates the proteolytic cleavage of IL6R, leading to the release of secreted form of IL6R. Mediates the proteolytic cleavage and shedding of FCGR3A upon NK cell stimulation, a mechanism that allows for increased NK cell motility and detachment from opsonized target cells. Cleaves TREM2, resulting in shedding of the TREM2 ectodomain. The chain is Disintegrin and metalloproteinase domain-containing protein 17 (Adam17) from Rattus norvegicus (Rat).